Here is a 412-residue protein sequence, read N- to C-terminus: Gamma-glutamyl phosphate reductase (412 aa).

This sequence belongs to the gamma-glutamyl phosphate reductase family.

It is found in the cytoplasm. It carries out the reaction L-glutamate 5-semialdehyde + phosphate + NADP(+) = L-glutamyl 5-phosphate + NADPH + H(+). It participates in amino-acid biosynthesis; L-proline biosynthesis; L-glutamate 5-semialdehyde from L-glutamate: step 2/2. Its function is as follows. Catalyzes the NADPH-dependent reduction of L-glutamate 5-phosphate into L-glutamate 5-semialdehyde and phosphate. The product spontaneously undergoes cyclization to form 1-pyrroline-5-carboxylate. In Nitratiruptor sp. (strain SB155-2), this protein is Gamma-glutamyl phosphate reductase.